The chain runs to 542 residues: Membrane protein insertase YidC (542 aa).

5 helical membrane-spanning segments follow: residues 7–27 (LLVM…QQDF), 338–358 (FALL…IIGV), 417–437 (MGGC…YWTF), 455–475 (LSAQ…MFLL), and 494–514 (FMPV…VLYW).

It belongs to the OXA1/ALB3/YidC family. Type 1 subfamily. Interacts with the Sec translocase complex via SecD. Specifically interacts with transmembrane segments of nascent integral membrane proteins during membrane integration.

The protein localises to the cell inner membrane. Its function is as follows. Required for the insertion and/or proper folding and/or complex formation of integral membrane proteins into the membrane. Involved in integration of membrane proteins that insert both dependently and independently of the Sec translocase complex, as well as at least some lipoproteins. Aids folding of multispanning membrane proteins. The sequence is that of Membrane protein insertase YidC from Actinobacillus pleuropneumoniae serotype 7 (strain AP76).